Consider the following 369-residue polypeptide: MIQILLSTFISFIIIIVSSNDIRSGENDNFNNNKMINNFLTTITTNDTIIIKETESPNDYDFSKEQIESLDKIVYFSSTMGIVGALFIIVSFFLFKAARTFATKMIFFLSLSDLFAAIFYLPYYRDSDIMCNLQGMGLVFFLSSSYLWTMCISISLFMVFFTTIFELNHWFKYFHFICWGIPLFTAIISLIFHAYGKTGSWCFISDPTSIFRLLYYLPLIVVFFINLVVFIAIRWKISQHSNSLVSRVNIIVSFYLIAFSLSQLPTIINSIQNFSDPDNPQFSLFAFQLLLQPLQGFLNCVVYGINEGFINHYVEFFEKYIFRCRCRKSRELKEIESDKTSLLVDYENSDDEEGFDGMDKLIIDDYNRV.

The Extracellular segment spans residues 1-4 (MIQI). Residues 5–22 (LLSTFISFIIIIVSSNDI) form a helical membrane-spanning segment. The Cytoplasmic portion of the chain corresponds to 23-72 (RSGENDNFNNNKMINNFLTTITTNDTIIIKETESPNDYDFSKEQIESLDK). Residues 73–93 (IVYFSSTMGIVGALFIIVSFF) form a helical membrane-spanning segment. The Extracellular segment spans residues 94 to 100 (LFKAART). The chain crosses the membrane as a helical span at residues 101-121 (FATKMIFFLSLSDLFAAIFYL). At 122–146 (PYYRDSDIMCNLQGMGLVFFLSSSY) the chain is on the cytoplasmic side. The helical transmembrane segment at 147–167 (LWTMCISISLFMVFFTTIFEL) threads the bilayer. Over 168 to 173 (NHWFKY) the chain is Extracellular. The chain crosses the membrane as a helical span at residues 174–194 (FHFICWGIPLFTAIISLIFHA). The Cytoplasmic portion of the chain corresponds to 195 to 212 (YGKTGSWCFISDPTSIFR). Residues 213-233 (LLYYLPLIVVFFINLVVFIAI) form a helical membrane-spanning segment. Topologically, residues 234–247 (RWKISQHSNSLVSR) are extracellular. Residues 248-268 (VNIIVSFYLIAFSLSQLPTII) traverse the membrane as a helical segment. Topologically, residues 269–369 (NSIQNFSDPD…KLIIDDYNRV (101 aa)) are cytoplasmic.

The protein belongs to the G-protein coupled receptor 5 family.

The protein localises to the membrane. Receptor for cAMP which may play a role in prestalk cell differentiation. May act as a negative regulator of cell growth. The polypeptide is Cyclic AMP receptor-like protein A (crlA) (Dictyostelium discoideum (Social amoeba)).